Reading from the N-terminus, the 267-residue chain is Phosphate import ATP-binding protein PstB (267 aa).

An ABC transporter domain is found at 21–262 (VAARNLDFYY…PSKQQTEDYI (242 aa)). 53-60 (GPSGCGKS) is an ATP binding site.

It belongs to the ABC transporter superfamily. Phosphate importer (TC 3.A.1.7) family. As to quaternary structure, the complex is composed of two ATP-binding proteins (PstB), two transmembrane proteins (PstC and PstA) and a solute-binding protein (PstS).

It localises to the cell inner membrane. It carries out the reaction phosphate(out) + ATP + H2O = ADP + 2 phosphate(in) + H(+). Its function is as follows. Part of the ABC transporter complex PstSACB involved in phosphate import. Responsible for energy coupling to the transport system. In Xanthomonas oryzae pv. oryzae (strain MAFF 311018), this protein is Phosphate import ATP-binding protein PstB.